Here is a 74-residue protein sequence, read N- to C-terminus: Conotoxin Vt11.7 (74 aa).

A signal peptide spans 1–26 (MMFRLTSVGCFLLVIVLLNVAVLTNA). Cystine bridges form between Cys28–Cys42, Cys35–Cys47, Cys41–Cys51, and Cys46–Cys55. A propeptide spanning residues 62–74 (AHGHGLLRFWGQR) is cleaved from the precursor.

This sequence belongs to the conotoxin I2 superfamily. In terms of tissue distribution, expressed by the venom duct.

The protein resides in the secreted. The chain is Conotoxin Vt11.7 from Conus planorbis (Planorbis cone).